A 635-amino-acid polypeptide reads, in one-letter code: Beta-mannosyltransferase 2 (635 aa).

The Cytoplasmic segment spans residues 1 to 6 (MRTRLN). Residues 7 to 27 (FLLLCIASVLSVIWIGVLLTW) form a helical membrane-spanning segment. At 28–635 (NDNNLGGISL…EKKEAEKKGK (608 aa)) the chain is on the extracellular side. An N-linked (GlcNAc...) asparagine glycan is attached at Asn484. Positions 512 to 635 (TRGEAERRRR…EKKEAEKKGK (124 aa)) form a coiled coil. The interval 517-635 (ERRRRVAEER…EKKEAEKKGK (119 aa)) is disordered.

Belongs to the BMT family.

It localises to the membrane. In terms of biological role, beta-mannosyltransferase involved in cell wall biosynthesis. Initiates the beta-mannosylation of core N-linked glycans. In Komagataella phaffii (strain ATCC 76273 / CBS 7435 / CECT 11047 / NRRL Y-11430 / Wegner 21-1) (Yeast), this protein is Beta-mannosyltransferase 2 (BMT2).